The following is a 333-amino-acid chain: Glutamyl endopeptidase (333 aa).

Positions 1–29 (MKGKFLKVSSLFVATLTTATLVSSPAANA) are cleaved as a signal peptide. The propeptide occupies 30-68 (LSSKAMDNHPQQSQSSKQQTPKIQKGGNLKPLEQREHAN). Residues 33–61 (KAMDNHPQQSQSSKQQTPKIQKGGNLKPL) are disordered. Residues 40–54 (QQSQSSKQQTPKIQK) are compositionally biased toward low complexity. Residues histidine 119, aspartate 161, and serine 237 each act as charge relay system in the active site. Positions 283–333 (FANDDQPNNPDNPDNPNNPDNPNNPDNPNNPNNPDNPDNGDNNNSDNPDAA) are disordered. Residues 286 to 333 (DDQPNNPDNPDNPNNPDNPNNPDNPNNPNNPDNPDNGDNNNSDNPDAA) are compositionally biased toward low complexity. 11 repeat units span residues 289–291 (PNN), 292–294 (PDN), 295–297 (PDN), 298–300 (PNN), 301–303 (PDN), 304–306 (PNN), 307–309 (PDN), 310–312 (PNN), 313–315 (PNN), 316–318 (PDN), and 319–321 (PDN). The tract at residues 289–321 (PNNPDNPDNPNNPDNPNNPDNPNNPNNPDNPDN) is 11 X 3 AA repeats of P-[DN]-N.

It belongs to the peptidase S1B family. Post-translationally, proteolytically cleaved by aureolysin (aur). This cleavage leads to the activation of SspA.

The protein localises to the secreted. The enzyme catalyses Preferential cleavage: Glu-|-Xaa, Asp-|-Xaa.. Its function is as follows. Preferentially cleaves peptide bonds on the carboxyl-terminal side of aspartate and glutamate. Along with other extracellular proteases it is involved in colonization and infection of human tissues. Required for proteolytic maturation of thiol protease SspB and inactivation of SspC, an inhibitor of SspB. It is the most important protease for degradation of fibronectin-binding protein (FnBP) and surface protein A, which are involved in adherence to host cells. May also protect bacteria against host defense mechanism by cleaving the immunoglobulin classes IgG, IgA and IgM. May be involved in the stability of secreted lipases. The chain is Glutamyl endopeptidase (sspA) from Staphylococcus aureus (strain MSSA476).